Here is a 362-residue protein sequence, read N- to C-terminus: Solute carrier family 25 member 3 (362 aa).

A mitochondrion-targeting transit peptide spans 1–49 (MFSSVAHLARANPFNTPHLQLVHDGLGDLRSSSPGPTGQPRRPRNLAAA). Over 50–63 (AVEEQYSCDYGSGR) the chain is Mitochondrial intermembrane. 3 Solcar repeats span residues 63-147 (RFFI…FKVL), 160-244 (WRTS…TVEA), and 261-339 (EQLV…VKVY). The helical transmembrane segment at 64–86 (FFILCGLGGIISCGTTHTALVPL) threads the bilayer. Residues 87–121 (DLVKCRMQVDPQKYKGIFNGFSVTLKEDGVRGLAK) lie on the Mitochondrial matrix side of the membrane. An N6-acetyllysine modification is found at K99. K112 is subject to N6-methyllysine. Residues 122–141 (GWAPTFLGYSMQGLCKFGFY) traverse the membrane as a helical segment. Residues 142–161 (EVFKVLYSNMLGEENTYLWR) lie on the Mitochondrial intermembrane side of the membrane. A helical transmembrane segment spans residues 162 to 183 (TSLYLAASASAEFFADIALAPM). Over 184–218 (EAAKVRIQTQPGYANTLRDAAPKMYKEEGLKAFYK) the chain is Mitochondrial matrix. Residue Y196 is modified to Phosphotyrosine. Position 209 is an N6-acetyllysine (K209). The chain crosses the membrane as a helical span at residues 219–238 (GVAPLWMRQIPYTMMKFACF). Over 239 to 261 (ERTVEALYKFVVPKPRSECSKPE) the chain is Mitochondrial intermembrane. The chain crosses the membrane as a helical span at residues 262-284 (QLVVTFVAGYIAGVFCAIVSHPA). Residues 285-314 (DSVVSVLNKEKGSSASLVLKRLGFKGVWKG) lie on the Mitochondrial matrix side of the membrane. A helical transmembrane segment spans residues 315 to 333 (LFARIIMIGTLTALQWFIY). Residues 334–362 (DSVKVYFRLPRPPPPEMPESLKKKLGLTQ) lie on the Mitochondrial intermembrane side of the membrane.

The protein belongs to the mitochondrial carrier (TC 2.A.29) family. Interacts with PPIF; the interaction is impaired by CsA.

The protein localises to the mitochondrion inner membrane. The catalysed reaction is phosphate(in) + H(+)(in) = phosphate(out) + H(+)(out). Functionally, inorganic ion transporter that transports phosphate or copper ions across the mitochondrial inner membrane into the matrix compartment. Mediates proton-coupled symport of phosphate ions necessary for mitochondrial oxidative phosphorylation of ADP to ATP. Transports copper ions probably in the form of anionic copper(I) complexes to maintain mitochondrial matrix copper pool and to supply copper for cytochrome C oxidase complex assembly. May also play a role in regulation of the mitochondrial permeability transition pore (mPTP). In Homo sapiens (Human), this protein is Solute carrier family 25 member 3.